A 530-amino-acid polypeptide reads, in one-letter code: Glucose-6-phosphate isomerase (530 aa).

Glutamate 322 acts as the Proton donor in catalysis. Catalysis depends on residues histidine 351 and lysine 455.

Belongs to the GPI family.

It localises to the cytoplasm. The catalysed reaction is alpha-D-glucose 6-phosphate = beta-D-fructose 6-phosphate. It functions in the pathway carbohydrate biosynthesis; gluconeogenesis. It participates in carbohydrate degradation; glycolysis; D-glyceraldehyde 3-phosphate and glycerone phosphate from D-glucose: step 2/4. Functionally, catalyzes the reversible isomerization of glucose-6-phosphate to fructose-6-phosphate. The polypeptide is Glucose-6-phosphate isomerase (Geobacter sp. (strain M21)).